A 151-amino-acid polypeptide reads, in one-letter code: UPF0208 membrane protein ECA3038 (151 aa).

2 helical membrane-spanning segments follow: residues F46–G66 and L69–W89.

The protein belongs to the UPF0208 family.

Its subcellular location is the cell inner membrane. The polypeptide is UPF0208 membrane protein ECA3038 (Pectobacterium atrosepticum (strain SCRI 1043 / ATCC BAA-672) (Erwinia carotovora subsp. atroseptica)).